Reading from the N-terminus, the 188-residue chain is Interferon alpha-2 (188 aa).

Residues 1 to 23 (MALTFALLVALLVLSCKSSCSVG) form the signal peptide. 2 disulfides stabilise this stretch: C24/C121 and C52/C161. An O-linked (GalNAc...) threonine glycan is attached at T129.

This sequence belongs to the alpha/beta interferon family. As to quaternary structure, interacts with IFNAR2.

It localises to the secreted. Functionally, produced by macrophages, IFN-alpha have antiviral activities. This chain is Interferon alpha-2 (IFNA2), found in Homo sapiens (Human).